Here is a 74-residue protein sequence, read N- to C-terminus: Conotoxin Vt11.7 (74 aa).

The signal sequence occupies residues 1–26; it reads MMFRLTSVGCFLLVIVLLNVAVLTNA. 4 disulfides stabilise this stretch: Cys-28-Cys-42, Cys-35-Cys-47, Cys-41-Cys-51, and Cys-46-Cys-55. A propeptide spanning residues 62–74 is cleaved from the precursor; it reads AHGHGLLRFWGQR.

The protein belongs to the conotoxin I2 superfamily. Expressed by the venom duct.

The protein resides in the secreted. This is Conotoxin Vt11.7 from Conus planorbis (Planorbis cone).